Consider the following 340-residue polypeptide: Uridine nucleosidase (340 aa).

Histidine 254 is an active-site residue.

Belongs to the IUNH family.

Its subcellular location is the cytoplasm. The protein localises to the nucleus. The catalysed reaction is uridine + H2O = D-ribose + uracil. In terms of biological role, also acts on cytidine. The polypeptide is Uridine nucleosidase (URH1) (Saccharomyces cerevisiae (strain ATCC 204508 / S288c) (Baker's yeast)).